The chain runs to 493 residues: Glutamate--tRNA ligase (493 aa).

A 'HIGH' region motif is present at residues 10–20; the sequence is PSPTGDPHVGT. A 'KMSKS' region motif is present at residues 251–255; sequence KLSKR. K254 serves as a coordination point for ATP.

Belongs to the class-I aminoacyl-tRNA synthetase family. Glutamate--tRNA ligase type 1 subfamily. Monomer.

The protein localises to the cytoplasm. It carries out the reaction tRNA(Glu) + L-glutamate + ATP = L-glutamyl-tRNA(Glu) + AMP + diphosphate. Functionally, catalyzes the attachment of glutamate to tRNA(Glu) in a two-step reaction: glutamate is first activated by ATP to form Glu-AMP and then transferred to the acceptor end of tRNA(Glu). This is Glutamate--tRNA ligase from Pseudomonas syringae pv. syringae (strain B728a).